The primary structure comprises 197 residues: MDNNRIGEVQRKTSETEVLLQVELDGTGNHQIDTEIPFLNHMLTLFSFHSLCNLRVTARGDVEVDDHHSVEDIAICLGQALKMALGDKRGITRYGEATVPMDESLARVVLDLSGRSYLVYNVPMEREMIGNFATENVREFFQAVAANAGINIHIDLLRGSNTHHIIEAVFKAFARALKDAIEIEPRMEGIWSSKRVL.

It belongs to the imidazoleglycerol-phosphate dehydratase family.

The protein resides in the cytoplasm. The catalysed reaction is D-erythro-1-(imidazol-4-yl)glycerol 3-phosphate = 3-(imidazol-4-yl)-2-oxopropyl phosphate + H2O. It participates in amino-acid biosynthesis; L-histidine biosynthesis; L-histidine from 5-phospho-alpha-D-ribose 1-diphosphate: step 6/9. The sequence is that of Imidazoleglycerol-phosphate dehydratase from Syntrophomonas wolfei subsp. wolfei (strain DSM 2245B / Goettingen).